Here is a 143-residue protein sequence, read N- to C-terminus: Large ribosomal subunit protein uL16c (143 aa).

It belongs to the universal ribosomal protein uL16 family. In terms of assembly, part of the 50S ribosomal subunit.

It localises to the plastid. Its subcellular location is the chloroplast. The protein is Large ribosomal subunit protein uL16c of Spirogyra maxima (Green alga).